Consider the following 161-residue polypeptide: Small ribosomal subunit protein uS9 (161 aa).

It belongs to the universal ribosomal protein uS9 family.

The polypeptide is Small ribosomal subunit protein uS9 (Methylobacterium radiotolerans (strain ATCC 27329 / DSM 1819 / JCM 2831 / NBRC 15690 / NCIMB 10815 / 0-1)).